The chain runs to 30 residues: Dicynthaurin (30 aa).

Residue T30 is modified to Threonine amide.

In terms of assembly, homodimer.

It localises to the secreted. Its function is as follows. Shows antibacterial activity against both Gram-positive and Gram-negative bacteria. Its antimicrobial activity is optimal at NaCl concentrations below 100 mM, suggesting that the antimicrobial actions of this peptide may take place intracellularly rather than extracellularly. Has no activity against the fungus C.albicans. Has modest hemolytic activity. This Halocynthia aurantium (Sea peach) protein is Dicynthaurin.